We begin with the raw amino-acid sequence, 280 residues long: Soluble inorganic pyrophosphatase 1, chloroplastic (280 aa).

Residue Arg-120 coordinates diphosphate. Residues Asp-152, Asp-157, and Asp-189 each coordinate Mg(2+).

Monomer. Mg(2+) serves as cofactor. The N-terminus is blocked.

It localises to the plastid. The protein localises to the chloroplast. It carries out the reaction diphosphate + H2O = 2 phosphate + H(+). This is Soluble inorganic pyrophosphatase 1, chloroplastic (ppa1) from Chlamydomonas reinhardtii (Chlamydomonas smithii).